A 79-amino-acid chain; its full sequence is U-actitoxin-Avd8b (79 aa).

A signal peptide spans 1–19; the sequence is MKSLVIVFVVLLGVAMISA. The propeptide occupies 20-36; that stretch reads NEEELLAILQDQRNDAR.

This sequence belongs to the sea anemone 8 toxin family.

Its subcellular location is the secreted. The protein localises to the nematocyst. The polypeptide is U-actitoxin-Avd8b (Anemonia viridis (Snakelocks anemone)).